Reading from the N-terminus, the 350-residue chain is Methionine import ATP-binding protein MetN (350 aa).

Positions 9-245 constitute an ABC transporter domain; sequence LKDVDVEFHG…PQQQLTKDFI (237 aa). Position 43 to 50 (43 to 50) interacts with ATP; sequence GYSGAGKS.

The protein belongs to the ABC transporter superfamily. Methionine importer (TC 3.A.1.24) family. In terms of assembly, the complex is composed of two ATP-binding proteins (MetN), two transmembrane proteins (MetI) and a solute-binding protein (MetQ).

It is found in the cell membrane. The catalysed reaction is L-methionine(out) + ATP + H2O = L-methionine(in) + ADP + phosphate + H(+). The enzyme catalyses D-methionine(out) + ATP + H2O = D-methionine(in) + ADP + phosphate + H(+). In terms of biological role, part of the ABC transporter complex MetNIQ involved in methionine import. Responsible for energy coupling to the transport system. The protein is Methionine import ATP-binding protein MetN of Lacticaseibacillus paracasei (strain ATCC 334 / BCRC 17002 / CCUG 31169 / CIP 107868 / KCTC 3260 / NRRL B-441) (Lactobacillus paracasei).